Here is a 417-residue protein sequence, read N- to C-terminus: Serine hydroxymethyltransferase (417 aa).

Residues Leu112 and Gly116–Leu118 contribute to the (6S)-5,6,7,8-tetrahydrofolate site. The residue at position 221 (Lys221) is an N6-(pyridoxal phosphate)lysine. Residue Glu247 participates in (6S)-5,6,7,8-tetrahydrofolate binding.

The protein belongs to the SHMT family. Homodimer. The cofactor is pyridoxal 5'-phosphate.

The protein localises to the cytoplasm. The catalysed reaction is (6R)-5,10-methylene-5,6,7,8-tetrahydrofolate + glycine + H2O = (6S)-5,6,7,8-tetrahydrofolate + L-serine. It participates in one-carbon metabolism; tetrahydrofolate interconversion. The protein operates within amino-acid biosynthesis; glycine biosynthesis; glycine from L-serine: step 1/1. Its function is as follows. Catalyzes the reversible interconversion of serine and glycine with tetrahydrofolate (THF) serving as the one-carbon carrier. This reaction serves as the major source of one-carbon groups required for the biosynthesis of purines, thymidylate, methionine, and other important biomolecules. Also exhibits THF-independent aldolase activity toward beta-hydroxyamino acids, producing glycine and aldehydes, via a retro-aldol mechanism. The protein is Serine hydroxymethyltransferase of Borrelia turicatae (strain 91E135).